Reading from the N-terminus, the 261-residue chain is Small ribosomal subunit protein uS2 (261 aa).

Belongs to the universal ribosomal protein uS2 family.

In Streptococcus mutans serotype c (strain ATCC 700610 / UA159), this protein is Small ribosomal subunit protein uS2.